A 310-amino-acid polypeptide reads, in one-letter code: Succinate dehydrogenase assembly factor 2, mitochondrial (310 aa).

Over residues Leu-35–Ala-48 the composition is skewed to basic and acidic residues. Residues Leu-35–Ser-67 form a disordered region. Over residues Asn-52 to Ser-67 the composition is skewed to polar residues.

It belongs to the SDHAF2 family. As to quaternary structure, interacts with the flavoprotein subunit within the SDH catalytic dimer.

It is found in the mitochondrion matrix. Plays an essential role in the assembly of succinate dehydrogenase (SDH), an enzyme complex (also referred to as respiratory complex II) that is a component of both the tricarboxylic acid (TCA) cycle and the mitochondrial electron transport chain, and which couples the oxidation of succinate to fumarate with the reduction of ubiquinone (coenzyme Q) to ubiquinol. Required for flavinylation (covalent attachment of FAD) of the flavoprotein subunit of the SDH catalytic dimer. The polypeptide is Succinate dehydrogenase assembly factor 2, mitochondrial (Penicillium rubens (strain ATCC 28089 / DSM 1075 / NRRL 1951 / Wisconsin 54-1255) (Penicillium chrysogenum)).